An 861-amino-acid polypeptide reads, in one-letter code: Glucans biosynthesis glucosyltransferase H (861 aa).

6 helical membrane passes run 142–162 (FILLLLMLAQTSVATYYMKGI), 188–208 (VLPYVIQFGILALFAILFCWV), 516–536 (VFLTGVMSYLSAPLWFFFLVL), 573–593 (LFSTTLTLLFLPKLLSVMLIW), 600–620 (FGGVIRVTLSMLLEMFFSVLL), and 683–703 (FLWWLSPIVGSLILSIPVSVI).

This sequence belongs to the glycosyltransferase 2 family. OpgH subfamily.

It is found in the cell inner membrane. It functions in the pathway glycan metabolism; osmoregulated periplasmic glucan (OPG) biosynthesis. In terms of biological role, involved in the biosynthesis of osmoregulated periplasmic glucans (OPGs). In Pseudomonas aeruginosa (strain UCBPP-PA14), this protein is Glucans biosynthesis glucosyltransferase H.